Here is a 174-residue protein sequence, read N- to C-terminus: Cytoglobin-1 (174 aa).

A Globin domain is found at 15-165; sequence SLTEEDVCVI…LYWQMNRVYA (151 aa). 2 residues coordinate heme b: H78 and H110.

It belongs to the globin family. In terms of assembly, monomeric. Expressed in all tissues examined with highest levels in brain, eye, gut and heart.

It is found in the cytoplasm. It localises to the nucleus. It catalyses the reaction Fe(II)-heme b-[protein] + nitric oxide + O2 = Fe(III)-heme b-[protein] + nitrate. The enzyme catalyses Fe(III)-heme b-[protein] + nitric oxide + H2O = Fe(II)-heme b-[protein] + nitrite + 2 H(+). It carries out the reaction 2 superoxide + 2 H(+) = H2O2 + O2. The catalysed reaction is H2O2 + AH2 = A + 2 H2O. Probable multifunctional globin with a hexacoordinated heme iron required for the catalysis of various reactions depending on redox condition of the cell as well as oxygen availability. Has a nitric oxide dioxygenase (NOD) activity and is most probably involved in cell-mediated and oxygen-dependent nitric oxide consumption. Under normoxic conditions functions as a nitric oxide dioxygenase (NOD) but under hypoxic conditions the globin may switch its function to that of a nitrite (NO2) reductase (NiR), generating nitric oxide. Could also have peroxidase and superoxide dismutase activities, detoxifying reactive oxygen species and protecting cells against oxidative stress. Also binds dioxygen with low affinity and could function as an oxygen sensor but has probably no function as a respiratory oxygen carrier. This chain is Cytoglobin-1 (cygb1), found in Danio rerio (Zebrafish).